Reading from the N-terminus, the 232-residue chain is Dephospho-CoA kinase (232 aa).

In terms of domain architecture, DPCK spans 3–206 (IVGLTGGIAS…RPLTWIEFWR (204 aa)). 8 to 15 (GGIASGKS) contacts ATP.

This sequence belongs to the CoaE family.

It is found in the peroxisome. The enzyme catalyses 3'-dephospho-CoA + ATP = ADP + CoA + H(+). The protein operates within cofactor biosynthesis; coenzyme A biosynthesis; CoA from (R)-pantothenate: step 5/5. In terms of biological role, catalyzes the phosphorylation of the 3'-hydroxyl group of dephosphocoenzyme A to form coenzyme A. The polypeptide is Dephospho-CoA kinase (Arabidopsis thaliana (Mouse-ear cress)).